A 423-amino-acid polypeptide reads, in one-letter code: Glutamyl-tRNA reductase (423 aa).

Substrate contacts are provided by residues 49–52 (TCNR), Ser-107, 112–114 (EPQ), and Gln-118. Cys-50 functions as the Nucleophile in the catalytic mechanism. Residue 187–192 (GAGETI) participates in NADP(+) binding.

The protein belongs to the glutamyl-tRNA reductase family. Homodimer.

It catalyses the reaction (S)-4-amino-5-oxopentanoate + tRNA(Glu) + NADP(+) = L-glutamyl-tRNA(Glu) + NADPH + H(+). Its pathway is porphyrin-containing compound metabolism; protoporphyrin-IX biosynthesis; 5-aminolevulinate from L-glutamyl-tRNA(Glu): step 1/2. Catalyzes the NADPH-dependent reduction of glutamyl-tRNA(Glu) to glutamate 1-semialdehyde (GSA). The protein is Glutamyl-tRNA reductase of Pseudoalteromonas atlantica (strain T6c / ATCC BAA-1087).